Consider the following 464-residue polypeptide: MRKVLLVEPVIFIYIFASSLTSPVVQQFIYRKLWEEEYNSTAISSDNSSHCERNKSSPTYVMEKAIQEKTSFFNMQLDLTGAVPSLIVAFIIVANGDHQGRKKSLVLPSIGALIADIFLTIVSYFSWPTSVLFLATFISGLFGSMATFLGGGFAYIADQCHDEKQKTTRIAVIDLIFGVVSGLAGLSSGYFLREMGFTWTFATASLLHVVNIIYITFFLQDTVHISEFQQQAPLSYKEHLKETFSGVYMLFKTAPSKKRILIIVLLFIFMTYLFTMFGGSSLFTLYELDEPLCWTEVYIGYGAAAFTSISLTSFLGVYLFSKCLKDIYIVFIGIFSYIGGIVMAAFAKTTLLMFLVRVPSLFSIMPIPVLRSMLSKVVLPSEQGAVFACIACLEVLTGTISLSVFNVIYAATVAWFSGFSFLLSASLCLIPLGVLCWLLCTSWNGEDLALLVPEEVSSIDSVDS.

The first 26 residues, 1–26 (MRKVLLVEPVIFIYIFASSLTSPVVQ), serve as a signal peptide directing secretion. Over 27–71 (QFIYRKLWEEEYNSTAISSDNSSHCERNKSSPTYVMEKAIQEKTS) the chain is Extracellular. N-linked (GlcNAc...) asparagine glycans are attached at residues asparagine 39, asparagine 47, and asparagine 54. The chain crosses the membrane as a helical span at residues 72 to 92 (FFNMQLDLTGAVPSLIVAFII). The Cytoplasmic segment spans residues 93-104 (VANGDHQGRKKS). The chain crosses the membrane as a helical span at residues 105-125 (LVLPSIGALIADIFLTIVSYF). Residues 126-130 (SWPTS) are Extracellular-facing. The chain crosses the membrane as a helical span at residues 131–151 (VLFLATFISGLFGSMATFLGG). The Cytoplasmic segment spans residues 152–171 (GFAYIADQCHDEKQKTTRIA). A helical transmembrane segment spans residues 172–192 (VIDLIFGVVSGLAGLSSGYFL). At 193–198 (REMGFT) the chain is on the extracellular side. A helical membrane pass occupies residues 199-219 (WTFATASLLHVVNIIYITFFL). Topologically, residues 220-259 (QDTVHISEFQQQAPLSYKEHLKETFSGVYMLFKTAPSKKR) are cytoplasmic. Residues 260-280 (ILIIVLLFIFMTYLFTMFGGS) form a helical membrane-spanning segment. Residues 281–296 (SLFTLYELDEPLCWTE) lie on the Extracellular side of the membrane. Residues 297 to 317 (VYIGYGAAAFTSISLTSFLGV) form a helical membrane-spanning segment. Residues 318 to 326 (YLFSKCLKD) lie on the Cytoplasmic side of the membrane. The helical transmembrane segment at 327-347 (IYIVFIGIFSYIGGIVMAAFA) threads the bilayer. At 348 to 349 (KT) the chain is on the extracellular side. The chain crosses the membrane as a helical span at residues 350-370 (TLLMFLVRVPSLFSIMPIPVL). Over 371-384 (RSMLSKVVLPSEQG) the chain is Cytoplasmic. Residues 385–405 (AVFACIACLEVLTGTISLSVF) traverse the membrane as a helical segment. The Extracellular portion of the chain corresponds to 406–418 (NVIYAATVAWFSG). The helical transmembrane segment at 419–439 (FSFLLSASLCLIPLGVLCWLL) threads the bilayer. Topologically, residues 440-464 (CTSWNGEDLALLVPEEVSSIDSVDS) are cytoplasmic.

Belongs to the major facilitator superfamily. SLC46A family.

The protein localises to the lysosome membrane. It catalyses the reaction estrone 3-sulfate(out) + n H(+)(out) = estrone 3-sulfate(in) + n H(+)(in). It carries out the reaction 25-hydroxyvitamin D3 sulfate(out) + n H(+)(out) = 25-hydroxyvitamin D3 sulfate(in) + n H(+)(in). The catalysed reaction is cholate(out) + n H(+)(out) = cholate(in) + n H(+)(in). The enzyme catalyses glycocholate(out) + n H(+)(out) = glycocholate(in) + n H(+)(in). It catalyses the reaction taurocholate(out) + n H(+)(out) = taurocholate(in) + n H(+)(in). It carries out the reaction dehydroepiandrosterone 3-sulfate(out) + n H(+)(out) = dehydroepiandrosterone 3-sulfate(in) + n H(+)(in). Lysosomal proton-coupled steroid conjugate and bile acid transporter. Preferentially recognizes lipophilic steroid conjugates or bile acis as endogenous substrates and seems to mediate escape from lysosomes to the cytoplasm. Modulates hepatic cytosolic copper homeostasis, maybe acting as a lysosomal copper transporter and sequestering copper ions in the lysosome. The protein is Lysosomal proton-coupled steroid conjugate and bile acid symporter SLC46A3 (SLC46A3) of Gallus gallus (Chicken).